A 337-amino-acid chain; its full sequence is UDP-N-acetylenolpyruvoylglucosamine reductase (337 aa).

An FAD-binding PCMH-type domain is found at 16–187; sequence ALPGRAARYQ…TSVIFRLAKA (172 aa). Residue R160 is part of the active site. S237 serves as the catalytic Proton donor. Residue E333 is part of the active site.

Requires FAD as cofactor.

Its subcellular location is the cytoplasm. It carries out the reaction UDP-N-acetyl-alpha-D-muramate + NADP(+) = UDP-N-acetyl-3-O-(1-carboxyvinyl)-alpha-D-glucosamine + NADPH + H(+). The protein operates within cell wall biogenesis; peptidoglycan biosynthesis. In terms of biological role, cell wall formation. The protein is UDP-N-acetylenolpyruvoylglucosamine reductase of Dechloromonas aromatica (strain RCB).